The chain runs to 165 residues: Large ribosomal subunit protein uL10 (165 aa).

Belongs to the universal ribosomal protein uL10 family. In terms of assembly, part of the ribosomal stalk of the 50S ribosomal subunit. The N-terminus interacts with L11 and the large rRNA to form the base of the stalk. The C-terminus forms an elongated spine to which L12 dimers bind in a sequential fashion forming a multimeric L10(L12)X complex.

Forms part of the ribosomal stalk, playing a central role in the interaction of the ribosome with GTP-bound translation factors. In Burkholderia multivorans (strain ATCC 17616 / 249), this protein is Large ribosomal subunit protein uL10.